A 141-amino-acid polypeptide reads, in one-letter code: Endoribonuclease YbeY (141 aa).

Residues His-105, His-109, and Asp-115 each coordinate Zn(2+).

It belongs to the endoribonuclease YbeY family. Zn(2+) serves as cofactor.

It is found in the cytoplasm. Single strand-specific metallo-endoribonuclease involved in late-stage 70S ribosome quality control and in maturation of the 3' terminus of the 16S rRNA. This Chlorobaculum parvum (strain DSM 263 / NCIMB 8327) (Chlorobium vibrioforme subsp. thiosulfatophilum) protein is Endoribonuclease YbeY.